A 162-amino-acid polypeptide reads, in one-letter code: Serine-protein kinase RsbW (162 aa).

Belongs to the anti-sigma-factor family.

The catalysed reaction is L-seryl-[protein] + ATP = O-phospho-L-seryl-[protein] + ADP + H(+). It catalyses the reaction L-threonyl-[protein] + ATP = O-phospho-L-threonyl-[protein] + ADP + H(+). Negative regulator of sigma-B activity. Phosphorylates and inactivates its specific antagonist protein, RsbV. Upon phosphorylation of RsbV, RsbW is released and binds to sigma-B, thereby blocking its ability to form an RNA polymerase holoenzyme (E-sigma-B). This is Serine-protein kinase RsbW from Bacillus pumilus (strain SAFR-032).